The following is a 908-amino-acid chain: Flap endonuclease GEN homolog 1 (908 aa).

The XPG-N domain stretch occupies residues Gly2–Ser96. 7 residues coordinate Mg(2+): Asp30, Glu75, Glu134, Glu136, Asp155, Asp157, and Asp208. Positions Glu122–Asp208 are XPG-I domain. Residues Asp208–Met384 form a 5'-3' exonuclease domain region. A chromodomain region spans residues Gly390–Lys464. Phosphoserine occurs at positions 801 and 802.

It belongs to the XPG/RAD2 endonuclease family. GEN subfamily. In terms of assembly, largely monomeric, dimerizes on the Holliday junction and the first nick occurs upon dimerization at the junction. Mg(2+) is required as a cofactor.

It is found in the nucleus. Endonuclease which resolves Holliday junctions (HJs) by the introduction of symmetrically related cuts across the junction point, to produce nicked duplex products in which the nicks can be readily ligated. Four-way DNA intermediates, also known as Holliday junctions, are formed during homologous recombination and DNA repair, and their resolution is necessary for proper chromosome segregation. Cleaves HJs by a nick and counter-nick mechanism involving dual coordinated incisions that lead to the formation of ligatable nicked duplex products. Cleavage of the first strand is rate limiting, while second strand cleavage is rapid. Largely monomeric, dimerizes on the HJ and the first nick occurs upon dimerization at the junction. Efficiently cleaves both single and double HJs contained within large recombination intermediates. Exhibits a weak sequence preference for incision between two G residues that reside in a T-rich region of DNA. Also has endonuclease activity on 5'-flap and replication fork (RF) DNA substrates. The sequence is that of Flap endonuclease GEN homolog 1 (GEN1) from Homo sapiens (Human).